The chain runs to 183 residues: Protein jagunal homolog 1-B (183 aa).

Over 1–39 the chain is Cytoplasmic; that stretch reads MASRAGPRATGTDGSDYQHRERVASHYQMSVALKSEIKK. Residues 40–60 form a helical membrane-spanning segment; sequence LNIAHAVVWFLVAAQVLVSQL. The Lumenal portion of the chain corresponds to 61 to 71; that stretch reads NLVSHKVVASP. A helical membrane pass occupies residues 72–92; the sequence is YQWEYTYLLSIIPTVFSFMAL. At 93–99 the chain is on the cytoplasmic side; the sequence is PKNNISY. A helical transmembrane segment spans residues 100 to 120; it reads LVISMISGGLFCIGPILYGGM. Residues 121–137 lie on the Lumenal side of the membrane; that stretch reads EMFPVAQQLYRHGKAYR. Residues 138–158 form a helical membrane-spanning segment; the sequence is FIFGFSAVSIMYLVLIISVQV. The Cytoplasmic segment spans residues 159-183; sequence HGWQIYYSKKLLDAWFTNTQDKKKK.

This sequence belongs to the jagunal family.

It is found in the endoplasmic reticulum membrane. Functionally, endoplasmic reticulum transmembrane protein involved in vesicle-mediated transport, which is required for neutrophil function. In Danio rerio (Zebrafish), this protein is Protein jagunal homolog 1-B (jagn1b).